Reading from the N-terminus, the 166-residue chain is Large ribosomal subunit protein uL10 (166 aa).

The protein belongs to the universal ribosomal protein uL10 family. In terms of assembly, part of the ribosomal stalk of the 50S ribosomal subunit. The N-terminus interacts with L11 and the large rRNA to form the base of the stalk. The C-terminus forms an elongated spine to which L12 dimers bind in a sequential fashion forming a multimeric L10(L12)X complex.

In terms of biological role, forms part of the ribosomal stalk, playing a central role in the interaction of the ribosome with GTP-bound translation factors. This Streptococcus pyogenes serotype M1 protein is Large ribosomal subunit protein uL10 (rplJ).